A 745-amino-acid polypeptide reads, in one-letter code: Dipeptidyl aminopeptidase 4 (745 aa).

The first 22 residues, 1-22 (MRLALFALFALMTVATALPAHA), serve as a signal peptide directing secretion. The substrate site is built by E208 and E209. Active-site charge relay system residues include S613, D689, and H721.

It belongs to the peptidase S9B family. Homodimer.

Its subcellular location is the cytoplasm. The protein localises to the periplasm. It carries out the reaction Release of an N-terminal dipeptide, Xaa-Yaa-|-Zaa-, from a polypeptide, preferentially when Yaa is Pro, provided Zaa is neither Pro nor hydroxyproline.. With respect to regulation, completely inhibited by the serine protease inhibitor diisopropyl fluorophosphate (DFP) and moderately by N-tosyl-L-phenyl-alanyl chloromethyl ketone (TPCK). Somewhat inhibited by phenylmethanesulfonyl fluoride (PMSF). Activity is not affected by thiol- or metalloprotease inhibitors, such as iodoacetate (IAA), EDTA, N-tosyl-L-lysyl chloromethyl ketone (TLCK), o-phenanthlorine, N-ethylmaleimide (NEM) or dithiothreitol (DTT). Catalyzes the sequential release of Tyr-Pro, Phe-Pro and Gly-Pro from the N-terminus of peptides and proteins. Is able to cleaves bioactive peptide beta-casomorphin. This is Dipeptidyl aminopeptidase 4 from Pseudoxanthomonas mexicana.